The following is a 681-amino-acid chain: PAB-dependent poly(A)-specific ribonuclease subunit pan3-like (681 aa).

The C3H1-type zinc finger occupies 9 to 38 (FSTNIPCRNEQLYGRCPYIDKGCFFQHKNQ). Disordered regions lie at residues 38–58 (QDNA…PQNS) and 82–123 (SSAS…TVSL). Over residues 41 to 50 (APASSKPPSA) the composition is skewed to low complexity. Residues 96–106 (KSYSSALSSGK) show a composition bias toward polar residues. Serine 165 is modified (phosphoserine).

This sequence belongs to the protein kinase superfamily. PAN3 family.

It is found in the cytoplasm. In terms of biological role, regulatory subunit of the poly(A)-nuclease (PAN) deadenylation complex. The protein is PAB-dependent poly(A)-specific ribonuclease subunit pan3-like of Schizosaccharomyces pombe (strain 972 / ATCC 24843) (Fission yeast).